Reading from the N-terminus, the 420-residue chain is Gamma-glutamyl phosphate reductase (420 aa).

This sequence belongs to the gamma-glutamyl phosphate reductase family.

It localises to the cytoplasm. It carries out the reaction L-glutamate 5-semialdehyde + phosphate + NADP(+) = L-glutamyl 5-phosphate + NADPH + H(+). The protein operates within amino-acid biosynthesis; L-proline biosynthesis; L-glutamate 5-semialdehyde from L-glutamate: step 2/2. Its function is as follows. Catalyzes the NADPH-dependent reduction of L-glutamate 5-phosphate into L-glutamate 5-semialdehyde and phosphate. The product spontaneously undergoes cyclization to form 1-pyrroline-5-carboxylate. This is Gamma-glutamyl phosphate reductase from Laribacter hongkongensis (strain HLHK9).